The primary structure comprises 149 residues: Putative pre-16S rRNA nuclease (149 aa).

This sequence belongs to the YqgF nuclease family.

It localises to the cytoplasm. In terms of biological role, could be a nuclease involved in processing of the 5'-end of pre-16S rRNA. The polypeptide is Putative pre-16S rRNA nuclease (Burkholderia vietnamiensis (strain G4 / LMG 22486) (Burkholderia cepacia (strain R1808))).